A 317-amino-acid chain; its full sequence is Aspartate carbamoyltransferase catalytic subunit (317 aa).

Arg-66 and Thr-67 together coordinate carbamoyl phosphate. Residue Lys-94 coordinates L-aspartate. Carbamoyl phosphate is bound by residues Arg-116, His-144, and Gln-147. Arg-177 and Arg-231 together coordinate L-aspartate. 2 residues coordinate carbamoyl phosphate: Gly-272 and Pro-273.

This sequence belongs to the aspartate/ornithine carbamoyltransferase superfamily. ATCase family. In terms of assembly, heterododecamer (2C3:3R2) of six catalytic PyrB chains organized as two trimers (C3), and six regulatory PyrI chains organized as three dimers (R2).

The enzyme catalyses carbamoyl phosphate + L-aspartate = N-carbamoyl-L-aspartate + phosphate + H(+). It functions in the pathway pyrimidine metabolism; UMP biosynthesis via de novo pathway; (S)-dihydroorotate from bicarbonate: step 2/3. Functionally, catalyzes the condensation of carbamoyl phosphate and aspartate to form carbamoyl aspartate and inorganic phosphate, the committed step in the de novo pyrimidine nucleotide biosynthesis pathway. The chain is Aspartate carbamoyltransferase catalytic subunit from Rhodopseudomonas palustris (strain HaA2).